The chain runs to 626 residues: ATP-dependent RNA helicase dbp-8 (626 aa).

A compositionally biased stretch (low complexity) spans 1–25 (MPSATAAKAKKANANANLKSKVNKA). The interval 1–183 (MPSATAAKAK…ATPALPVPEP (183 aa)) is disordered. The span at 40–98 (DESDFGSELDVEDESAASDEEDEDEDEDEHDLEEGVSDEGEGVSDEEEGVSDEDEDEEN) shows a compositional bias: acidic residues. Residues 161 to 173 (KQAEAPKTEKTEE) are compositionally biased toward basic and acidic residues. Positions 195-223 (TTFDALNVRPWLVQSLANMAIKRPTGIQK) match the Q motif motif. The 181-residue stretch at 226 to 406 (IPEILKGRDC…ERPPIPGRAP (181 aa)) folds into the Helicase ATP-binding domain. 239 to 246 (SRTGSGKT) is a binding site for ATP. The DEAD box signature appears at 348–351 (DEAD). Residues 438–589 (YLHMFLLTPQ…GVNLETRVIR (152 aa)) form the Helicase C-terminal domain.

Belongs to the DEAD box helicase family. DDX49/DBP8 subfamily.

Its subcellular location is the nucleus. It is found in the nucleolus. It carries out the reaction ATP + H2O = ADP + phosphate + H(+). Its function is as follows. ATP-binding RNA helicase involved in 40S ribosomal subunit biogenesis and is required for the normal formation of 18S rRNAs through pre-rRNA processing at A0, A1 and A2 sites. Required for vegetative growth. The sequence is that of ATP-dependent RNA helicase dbp-8 (dbp-8) from Neurospora crassa (strain ATCC 24698 / 74-OR23-1A / CBS 708.71 / DSM 1257 / FGSC 987).